The following is a 480-amino-acid chain: Adenosylhomocysteinase (480 aa).

Substrate contacts are provided by Thr63, Asp142, and Glu203. An NAD(+)-binding site is contributed by 204–206; that stretch reads TTT. Substrate is bound by residues Lys233 and Asp237. NAD(+)-binding positions include Asn238, 267–272, Glu290, Asn325, 346–348, and Asn394; these read GYGDVG and IGH.

It belongs to the adenosylhomocysteinase family. It depends on NAD(+) as a cofactor.

It localises to the cytoplasm. The catalysed reaction is S-adenosyl-L-homocysteine + H2O = L-homocysteine + adenosine. It functions in the pathway amino-acid biosynthesis; L-homocysteine biosynthesis; L-homocysteine from S-adenosyl-L-homocysteine: step 1/1. May play a key role in the regulation of the intracellular concentration of adenosylhomocysteine. This is Adenosylhomocysteinase from Xanthomonas oryzae pv. oryzae (strain PXO99A).